Reading from the N-terminus, the 1465-residue chain is Gag-Pol polyprotein (1465 aa).

A lipid anchor (N-myristoyl glycine; by host) is attached at glycine 2. The Nuclear export signal motif lies at 16 to 22 (FEHIRLR). The Nuclear localization signal signature appears at 26-32 (KKKYQIK). The disordered stretch occupies residues 116 to 144 (NAERNTTETSSGQKKNDKGVTVPPGGSQN). 2 consecutive CCHC-type zinc fingers follow at residues 402 to 419 (VKCY…QCPE) and 423 to 440 (MRCL…DCRG). Residues 532 to 603 (IRALLDTGAD…TPINIIGRNI (72 aa)) form the Peptidase A2 domain. The For protease activity; shared with dimeric partner role is filled by aspartate 537. The 191-residue stretch at 659-849 (EGKISKIGGE…PPYEWMGYKL (191 aa)) folds into the Reverse transcriptase domain. Mg(2+) is bound by residues aspartate 725, aspartate 800, and aspartate 801. The tract at residues 842 to 850 (YEWMGYKLW) is RT 'primer grip'. Positions 1012–1028 (WEQWWADYWQVSWIPDW) match the Tryptophan repeat motif motif. Positions 1048–1171 (IPKEDVYYVD…IDKLVSQGMR (124 aa)) constitute an RNase H type-1 domain. Mg(2+)-binding residues include aspartate 1057, glutamate 1092, aspartate 1112, and aspartate 1163. The Integrase-type zinc finger occupies 1177–1218 (EKIEEAQEEHERYHNNWRNLADTYGLPQIVAKEIVAMCPKCQ). Zn(2+)-binding residues include histidine 1186, histidine 1190, cysteine 1214, and cysteine 1217. An Integrase catalytic domain is found at 1228–1378 (VDASPGVWQM…TPAERLINMI (151 aa)). Residues aspartate 1238 and aspartate 1290 each contribute to the Mg(2+) site. The integrase-type DNA-binding region spans 1397–1444 (FRVYYREGRDPVWKGPGQLIWKGEGAVVIKGGVELKEYPRRKAKIIKD).

In terms of assembly, homotrimer. Interacts with gp41 (via C-terminus). Homodimer. The active site consists of two apposed aspartic acid residues. As to quaternary structure, heterodimer of p66 RT and p51 RT (RT p66/p51). Heterodimerization of RT is essential for DNA polymerase activity. Despite the sequence identities, p66 RT and p51 RT have distinct folding. In terms of assembly, homotetramer; may further associate as a homohexadecamer. It depends on Mg(2+) as a cofactor. Post-translationally, specific enzymatic cleavages by the viral protease yield mature proteins. The protease is released by autocatalytic cleavage. The polyprotein is cleaved during and after budding, this process is termed maturation. Proteolytic cleavage of p66 RT removes the RNase H domain to yield the p51 RT subunit. In terms of processing, capsid protein p24 is phosphorylated.

It is found in the virion. It localises to the host nucleus. Its subcellular location is the host cytoplasm. The protein resides in the host cell membrane. It carries out the reaction Specific for a P1 residue that is hydrophobic, and P1' variable, but often Pro.. The enzyme catalyses Endohydrolysis of RNA in RNA/DNA hybrids. Three different cleavage modes: 1. sequence-specific internal cleavage of RNA. Human immunodeficiency virus type 1 and Moloney murine leukemia virus enzymes prefer to cleave the RNA strand one nucleotide away from the RNA-DNA junction. 2. RNA 5'-end directed cleavage 13-19 nucleotides from the RNA end. 3. DNA 3'-end directed cleavage 15-20 nucleotides away from the primer terminus.. The catalysed reaction is 3'-end directed exonucleolytic cleavage of viral RNA-DNA hybrid.. It catalyses the reaction DNA(n) + a 2'-deoxyribonucleoside 5'-triphosphate = DNA(n+1) + diphosphate. With respect to regulation, the viral protease is inhibited by many synthetic protease inhibitors (PIs), such as amprenavir, atazanavir, indinavir, loprinavir, nelfinavir, ritonavir and saquinavir. RT can be inhibited either by nucleoside RT inhibitors (NRTIs) or by non nucleoside RT inhibitors (NNRTIs). NRTIs act as chain terminators, whereas NNRTIs inhibit DNA polymerization by binding a small hydrophobic pocket near the RT active site and inducing an allosteric change in this region. Classical NRTIs are abacavir, adefovir (PMEA), didanosine (ddI), lamivudine (3TC), stavudine (d4T), tenofovir (PMPA), zalcitabine (ddC), and zidovudine (AZT). Classical NNRTIs are atevirdine (BHAP U-87201E), delavirdine, efavirenz (DMP-266), emivirine (I-EBU), and nevirapine (BI-RG-587). The tritherapies used as a basic effective treatment of AIDS associate two NRTIs and one NNRTI. Use of protease inhibitors in tritherapy regimens permit more ambitious therapeutic strategies. Functionally, gag-Pol polyprotein and Gag polyprotein may regulate their own translation, by the binding genomic RNA in the 5'-UTR. At low concentration, Gag-Pol and Gag would promote translation, whereas at high concentration, the polyproteins encapsidate genomic RNA and then shut off translation. In terms of biological role, matrix protein p17 has two main functions: in infected cell, it targets Gag and Gag-pol polyproteins to the plasma membrane via a multipartite membrane-binding signal, that includes its myristointegration complex. The myristoylation signal and the NLS exert conflicting influences its subcellular localization. The key regulation of these motifs might be phosphorylation of a portion of MA molecules on the C-terminal tyrosine at the time of virus maturation, by virion-associated cellular tyrosine kinase. Implicated in the release from host cell mediated by Vpu. Its function is as follows. Capsid protein p24 forms the conical core that encapsulates the genomic RNA-nucleocapsid complex in the virion. The core is constituted by capsid protein hexamer subunits. The core is disassembled soon after virion entry. Interaction with host PPIA/CYPA protects the virus from restriction by host TRIM5-alpha and from an unknown antiviral activity in host cells. This capsid restriction by TRIM5 is one of the factors which restricts SIV to the simian species. Nucleocapsid protein p7 encapsulates and protects viral dimeric unspliced (genomic) RNA. Binds these RNAs through its zinc fingers. Facilitates rearangement of nucleic acid secondary structure during retrotranscription of genomic RNA. This capability is referred to as nucleic acid chaperone activity. Functionally, the aspartyl protease mediates proteolytic cleavages of Gag and Gag-Pol polyproteins during or shortly after the release of the virion from the plasma membrane. Cleavages take place as an ordered, step-wise cascade to yield mature proteins. This process is called maturation. Displays maximal activity during the budding process just prior to particle release from the cell. Also cleaves Nef and Vif, probably concomitantly with viral structural proteins on maturation of virus particles. Hydrolyzes host EIF4GI and PABP1 in order to shut off the capped cellular mRNA translation. The resulting inhibition of cellular protein synthesis serves to ensure maximal viral gene expression and to evade host immune response. In terms of biological role, reverse transcriptase/ribonuclease H (RT) is a multifunctional enzyme that converts the viral dimeric RNA genome into dsDNA in the cytoplasm, shortly after virus entry into the cell. This enzyme displays a DNA polymerase activity that can copy either DNA or RNA templates, and a ribonuclease H (RNase H) activity that cleaves the RNA strand of RNA-DNA heteroduplexes in a partially processive 3' to 5' endonucleasic mode. Conversion of viral genomic RNA into dsDNA requires many steps. A tRNA binds to the primer-binding site (PBS) situated at the 5'-end of the viral RNA. RT uses the 3' end of the tRNA primer to perform a short round of RNA-dependent minus-strand DNA synthesis. The reading proceeds through the U5 region and ends after the repeated (R) region which is present at both ends of viral RNA. The portion of the RNA-DNA heteroduplex is digested by the RNase H, resulting in a ssDNA product attached to the tRNA primer. This ssDNA/tRNA hybridizes with the identical R region situated at the 3' end of viral RNA. This template exchange, known as minus-strand DNA strong stop transfer, can be either intra- or intermolecular. RT uses the 3' end of this newly synthesized short ssDNA to perform the RNA-dependent minus-strand DNA synthesis of the whole template. RNase H digests the RNA template except for two polypurine tracts (PPTs) situated at the 5'-end and near the center of the genome. It is not clear if both polymerase and RNase H activities are simultaneous. RNase H can probably proceed both in a polymerase-dependent (RNA cut into small fragments by the same RT performing DNA synthesis) and a polymerase-independent mode (cleavage of remaining RNA fragments by free RTs). Secondly, RT performs DNA-directed plus-strand DNA synthesis using the PPTs that have not been removed by RNase H as primers. PPTs and tRNA primers are then removed by RNase H. The 3' and 5' ssDNA PBS regions hybridize to form a circular dsDNA intermediate. Strand displacement synthesis by RT to the PBS and PPT ends produces a blunt ended, linear dsDNA copy of the viral genome that includes long terminal repeats (LTRs) at both ends. Its function is as follows. Integrase catalyzes viral DNA integration into the host chromosome, by performing a series of DNA cutting and joining reactions. This enzyme activity takes place after virion entry into a cell and reverse transcription of the RNA genome in dsDNA. The first step in the integration process is 3' processing. This step requires a complex comprising the viral genome, matrix protein, Vpr and integrase. This complex is called the pre-integration complex (PIC). The integrase protein removes 2 nucleotides from each 3' end of the viral DNA, leaving recessed CA OH's at the 3' ends. In the second step, the PIC enters cell nucleus. This process is mediated through integrase and Vpr proteins, and allows the virus to infect a non dividing cell. This ability to enter the nucleus is specific of lentiviruses, other retroviruses cannot and rely on cell division to access cell chromosomes. In the third step, termed strand transfer, the integrase protein joins the previously processed 3' ends to the 5' ends of strands of target cellular DNA at the site of integration. The 5'-ends are produced by integrase-catalyzed staggered cuts, 5 bp apart. A Y-shaped, gapped, recombination intermediate results, with the 5'-ends of the viral DNA strands and the 3' ends of target DNA strands remaining unjoined, flanking a gap of 5 bp. The last step is viral DNA integration into host chromosome. This involves host DNA repair synthesis in which the 5 bp gaps between the unjoined strands are filled in and then ligated. Since this process occurs at both cuts flanking the SIV genome, a 5 bp duplication of host DNA is produced at the ends of SIV integration. Alternatively, Integrase may catalyze the excision of viral DNA just after strand transfer, this is termed disintegration. This chain is Gag-Pol polyprotein (gag-pol), found in Cercopithecidae (Old World monkeys).